The following is a 236-amino-acid chain: Biosynthetic peptidoglycan transglycosylase (236 aa).

Residues 12 to 31 (ALLWFAAGSVLVVLVLRWVP) form a helical membrane-spanning segment.

The protein belongs to the glycosyltransferase 51 family.

It is found in the cell inner membrane. The enzyme catalyses [GlcNAc-(1-&gt;4)-Mur2Ac(oyl-L-Ala-gamma-D-Glu-L-Lys-D-Ala-D-Ala)](n)-di-trans,octa-cis-undecaprenyl diphosphate + beta-D-GlcNAc-(1-&gt;4)-Mur2Ac(oyl-L-Ala-gamma-D-Glu-L-Lys-D-Ala-D-Ala)-di-trans,octa-cis-undecaprenyl diphosphate = [GlcNAc-(1-&gt;4)-Mur2Ac(oyl-L-Ala-gamma-D-Glu-L-Lys-D-Ala-D-Ala)](n+1)-di-trans,octa-cis-undecaprenyl diphosphate + di-trans,octa-cis-undecaprenyl diphosphate + H(+). It functions in the pathway cell wall biogenesis; peptidoglycan biosynthesis. Peptidoglycan polymerase that catalyzes glycan chain elongation from lipid-linked precursors. This Pseudomonas savastanoi pv. phaseolicola (strain 1448A / Race 6) (Pseudomonas syringae pv. phaseolicola (strain 1448A / Race 6)) protein is Biosynthetic peptidoglycan transglycosylase.